Here is an 881-residue protein sequence, read N- to C-terminus: Dynamin-like GTPase MGM1, mitochondrial (881 aa).

The N-terminal 59 residues, 1-59 (MNASPVRLLILRRQLATHPAILYSSPYIKSPLVHLHSRMSNVHRSAHANALSFVITRRS), are a transit peptide targeting the mitochondrion. The Mitochondrial matrix segment spans residues 60–72 (ISHFPKIISKIIR). The chain crosses the membrane as a helical; Signal-anchor for type II membrane protein span at residues 73-92 (LPIYVGGGMAAAGSYIAYKM). Topologically, residues 93 to 881 (EEASSFTKDK…KSYKGVSKNL (789 aa)) are mitochondrial intermembrane. The segment at 145-183 (ATSLDDDESKRQGDPKDDDDEDDDDEDDENDSVDTTQDE) is disordered. Residues 160 to 176 (KDDDDEDDDDEDDENDS) are compositionally biased toward acidic residues. Residues 207–505 (HLTLPSIVVI…LEISMSNALE (299 aa)) form the Dynamin-type G domain. Residues 217 to 224 (GSQSSGKS) are G1 motif. GTP contacts are provided by Ser220, Ser221, Gly222, Lys223, Ser224, Ser225, and Gly239. A Mg(2+)-binding site is contributed by Ser224. The G2 motif stretch occupies residues 243 to 245 (VTR). Positions 244 and 317 each coordinate Mg(2+). The interval 317 to 320 (DLPG) is G3 motif. The tract at residues 385-388 (TKLD) is G4 motif. Residues Lys386, Asp388, and Thr415 each coordinate GTP. Residues 414-417 (ITKT) form a G5 motif region. Residues 668–780 (STADQVENCI…KMLKNKCHST (113 aa)) are paddle region. Cys777 and Cys786 are joined by a disulfide. In terms of domain architecture, GED spans 780-872 (TIEKDRCPEV…KIDSILVFKK (93 aa)).

This sequence belongs to the TRAFAC class dynamin-like GTPase superfamily. Dynamin/Fzo/YdjA family. As to quaternary structure, oligomeric complex consisting of membrane-bound and soluble forms of MGM1. Associates with FZO1 through interaction with the intermembrane space domain of UGO1 which binds FZO1 through its cytoplasmic domain. Cleavage of the transit peptide by mitochondrial processing protease (MPP) produces a long integral membrane form of MGM1 (l-MGM1). Further processing by the rhomboid protease PCP1 produces a short peripheral membrane form of MGM1 (s-MGM1). Both isoforms are required for full activity.

The protein localises to the mitochondrion inner membrane. Its subcellular location is the mitochondrion intermembrane space. It carries out the reaction GTP + H2O = GDP + phosphate + H(+). Dynamin-related GTPase that is essential for normal mitochondrial morphology by mediating fusion of the mitochondrial inner membranes, regulating cristae morphology and maintaining respiratory chain function. Exists in two forms: the transmembrane, long form (Dynamin-like GTPase MGM1, long form; L-MGM1), which is tethered to the inner mitochondrial membrane, and the short soluble form (Dynamin-like GTPase MGM1, short form; S-MGM1), which results from proteolytic cleavage and localizes in the intermembrane space. Both forms (L-MGM1 and S-MGM1) cooperate to catalyze the fusion of the mitochondrial inner membrane. The equilibrium between L-MGM1 and S-MGM1 is essential: excess levels of S-MGM1, following loss of mitochondrial membrane potential, lead to an impaired equilibrium between L-MGM1 and S-MGM1, inhibiting mitochondrial fusion. Plays a role in the maintenance and remodeling of mitochondrial cristae, some invaginations of the mitochondrial inner membrane that provide an increase in the surface area. Probably acts by forming helical filaments at the inside of inner membrane tubes with the shape and dimensions of crista junctions. Functionally, constitutes the transmembrane long form (L-MGM1) that plays a central role in mitochondrial inner membrane fusion and cristae morphology. L-MGM1 and the soluble short form (S-MGM1) form higher-order helical assemblies that coordinate the fusion of mitochondrial inner membranes. Inner membrane-anchored L-MGM1 molecules initiate membrane remodeling by recruiting soluble S-MGM1 to rapidly polymerize into a flexible cylindrical scaffold encaging the mitochondrial inner membrane. Once at the membrane surface, the formation of S-MGM1 helices induce bilayer curvature. MGM1 dimerization through the paddle region, which inserts into cardiolipin-containing membrane, promotes GTP hydrolysis and the helical assembly of a flexible MGM1 lattice on the membrane, which drives membrane curvature and mitochondrial fusion. In terms of biological role, constitutes the soluble short form (S-MGM1) generated by cleavage by PCP1, which plays a central role in mitochondrial inner membrane fusion and cristae morphology. The transmembrane long form (L-MGM1) and the S-MGM1 form higher-order helical assemblies that coordinate the fusion of mitochondrial inner membranes. Inner membrane-anchored L-MGM1 molecules initiate membrane remodeling by recruiting soluble S-MGM1 to rapidly polymerize into a flexible cylindrical scaffold encaging the mitochondrial inner membrane. Once at the membrane surface, the formation of S-MGM1 helices induce bilayer curvature. MGM1 dimerization through the paddle region, which inserts into cardiolipin-containing membrane, promotes GTP hydrolysis and the helical assembly of a flexible MGM1 lattice on the membrane, which drives membrane curvature and mitochondrial fusion. Excess levels of S-MGM1 produced by cleavage by PCP1 following stress conditions that induce loss of mitochondrial membrane potential, lead to an impaired equilibrium between L-MGM1 and S-MGM1, thereby inhibiting mitochondrial fusion. This is Dynamin-like GTPase MGM1, mitochondrial from Saccharomyces cerevisiae (strain ATCC 204508 / S288c) (Baker's yeast).